A 545-amino-acid polypeptide reads, in one-letter code: 1,3-beta-glucanosyltransferase ARB_07487 (545 aa).

The signal sequence occupies residues 1 to 19; sequence MKFSSLAAATALVAGSVVA. N-linked (GlcNAc...) asparagine glycans are attached at residues asparagine 51 and asparagine 69. An intrachain disulfide couples cysteine 88 to cysteine 117. Residues tyrosine 106, 133-141, asparagine 174, and glutamate 175 contribute to the (1,3-beta-D-glucosyl)n site; that span reads SEPSTSIIR. Residue glutamate 175 is the Proton donor of the active site. The N-linked (GlcNAc...) asparagine glycan is linked to asparagine 179. The (1,3-beta-D-glucosyl)n site is built by aspartate 216 and arginine 221. 5 cysteine pairs are disulfide-bonded: cysteine 230/cysteine 363, cysteine 248/cysteine 279, cysteine 384/cysteine 437, cysteine 393/cysteine 464, and cysteine 412/cysteine 419. The Nucleophile role is filled by glutamate 276. Residue tyrosine 308 participates in (1,3-beta-D-glucosyl)n binding. The interval 493 to 513 is disordered; the sequence is GTGSVTSAPGSGGNKPDQGAA. Residue alanine 512 is the site of GPI-anchor amidated alanine attachment. Positions 513 to 545 are cleaved as a propeptide — removed in mature form; sequence ASTISAPSVNLGIVKLGAYIFCAVLAGAGMILI.

It belongs to the glycosyl hydrolase 72 family. In terms of processing, the GPI-anchor is attached to the protein in the endoplasmic reticulum and serves to target the protein to the cell surface. There, the glucosamine-inositol phospholipid moiety is cleaved off and the GPI-modified mannoprotein is covalently attached via its lipidless GPI glycan remnant to the 1,6-beta-glucan of the outer cell wall layer.

It localises to the secreted. The protein localises to the cell membrane. It is found in the cell wall. Functionally, splits internally a 1,3-beta-glucan molecule and transfers the newly generated reducing end (the donor) to the non-reducing end of another 1,3-beta-glucan molecule (the acceptor) forming a 1,3-beta linkage, resulting in the elongation of 1,3-beta-glucan chains in the cell wall. Involved in cell wall biosynthesis and morphogenesis. This is 1,3-beta-glucanosyltransferase ARB_07487 from Arthroderma benhamiae (strain ATCC MYA-4681 / CBS 112371) (Trichophyton mentagrophytes).